Consider the following 263-residue polypeptide: uncharacterized protein (263 aa).

This sequence belongs to the AtsA family.

It localises to the plastid. Its subcellular location is the chloroplast. This is an uncharacterized protein from Porphyra purpurea (Red seaweed).